The sequence spans 54 residues: Large ribosomal subunit protein bL33 (54 aa).

The protein belongs to the bacterial ribosomal protein bL33 family.

The sequence is that of Large ribosomal subunit protein bL33 from Elusimicrobium minutum (strain Pei191).